The chain runs to 444 residues: tRNA pseudouridine synthase Pus10 (444 aa).

The active-site Nucleophile is the aspartate 265. The substrate site is built by tyrosine 333 and tyrosine 405.

The protein belongs to the pseudouridine synthase Pus10 family.

It carries out the reaction uridine(54) in tRNA = pseudouridine(54) in tRNA. The enzyme catalyses uridine(55) in tRNA = pseudouridine(55) in tRNA. Functionally, responsible for synthesis of pseudouridine from uracil-54 and uracil-55 in the psi GC loop of transfer RNAs. The sequence is that of tRNA pseudouridine synthase Pus10 from Thermofilum pendens (strain DSM 2475 / Hrk 5).